The primary structure comprises 337 residues: tRNA N6-adenosine threonylcarbamoyltransferase (337 aa).

Fe cation is bound by residues H111 and H115. Substrate contacts are provided by residues 134 to 138, D167, G180, and N272; that span reads LVSGG. D300 contributes to the Fe cation binding site.

Belongs to the KAE1 / TsaD family. Fe(2+) serves as cofactor.

The protein resides in the cytoplasm. The catalysed reaction is L-threonylcarbamoyladenylate + adenosine(37) in tRNA = N(6)-L-threonylcarbamoyladenosine(37) in tRNA + AMP + H(+). In terms of biological role, required for the formation of a threonylcarbamoyl group on adenosine at position 37 (t(6)A37) in tRNAs that read codons beginning with adenine. Is involved in the transfer of the threonylcarbamoyl moiety of threonylcarbamoyl-AMP (TC-AMP) to the N6 group of A37, together with TsaE and TsaB. TsaD likely plays a direct catalytic role in this reaction. The protein is tRNA N6-adenosine threonylcarbamoyltransferase of Salmonella schwarzengrund (strain CVM19633).